The chain runs to 238 residues: Uridylate kinase (238 aa).

12-15 (KLSG) contributes to the ATP binding site. Gly-54 contacts UMP. Positions 55 and 59 each coordinate ATP. Residues Asp-74 and 135-142 (TGNPFFTT) contribute to the UMP site. ATP is bound by residues Thr-162, Tyr-168, and Asp-171.

This sequence belongs to the UMP kinase family. In terms of assembly, homohexamer.

It is found in the cytoplasm. The catalysed reaction is UMP + ATP = UDP + ADP. It participates in pyrimidine metabolism; CTP biosynthesis via de novo pathway; UDP from UMP (UMPK route): step 1/1. With respect to regulation, inhibited by UTP. Catalyzes the reversible phosphorylation of UMP to UDP. In Aromatoleum aromaticum (strain DSM 19018 / LMG 30748 / EbN1) (Azoarcus sp. (strain EbN1)), this protein is Uridylate kinase.